The primary structure comprises 626 residues: Dynein, cytoplasmic 1, intermediate chain 2a (626 aa).

Basic and acidic residues predominate over residues 20-43 (QIREEKKRKEEERKKKEAELKKDA). Disordered stretches follow at residues 20 to 108 (QIRE…RTLH) and 142 to 197 (KEVV…HELT). Residues 82-99 (TAKSVGSPSEAGSQDSGD) are compositionally biased toward polar residues. The segment covering 160 to 169 (KDEEDEEEET) has biased composition (acidic residues). A compositionally biased stretch (basic and acidic residues) spans 177–197 (ETEKEKPEEKQVEEALPHELT). 7 WD repeats span residues 265–314 (SKQR…ATPE), 318–358 (HCQS…RTPV), 367–408 (AHTH…QPQD), 417–457 (SKSV…AGIS), 462–507 (GHHG…PLYS), 510–550 (DNSD…EVPT), and 556–595 (DGSP…AVPR).

Belongs to the dynein intermediate chain family. Homodimer. The cytoplasmic dynein 1 complex consists of two catalytic heavy chains (HCs) and a number of non-catalytic subunits presented by intermediate chains (ICs), light intermediate chains (LICs) and light chains (LCs); the composition seems to vary in respect to the IC, LIC and LC composition. The heavy chain homodimer serves as a scaffold for the probable homodimeric assembly of the respective non-catalytic subunits. The ICs and LICs bind directly to the HC dimer and the LCs assemble on the IC dimer.

It is found in the cytoplasm. The protein resides in the cytoskeleton. Acts as one of several non-catalytic accessory components of the cytoplasmic dynein 1 complex that are thought to be involved in linking dynein to cargos and to adapter proteins that regulate dynein function. Cytoplasmic dynein 1 acts as a motor for the intracellular retrograde motility of vesicles and organelles along microtubules. Plays a role in the development of anterior brain and cartilaginous structures. This is Dynein, cytoplasmic 1, intermediate chain 2a (dync1i2a) from Danio rerio (Zebrafish).